Here is a 220-residue protein sequence, read N- to C-terminus: Adenylate kinase (220 aa).

10–15 is a binding site for ATP; sequence GAGKGT. The segment at 30–59 is NMP; sequence STGDMLRAAVKAGTPLGVEAKTYMDEGKLV. AMP contacts are provided by residues threonine 31, arginine 36, 57 to 59, 85 to 88, and glutamine 92; these read KLV and GFPR. Positions 122 to 159 are LID; the sequence is GRRTHPASGRTYHVKFNPPKVEGKDDVTGEPLVQRDDD. Residues arginine 123 and 132 to 133 each bind ATP; that span reads TY. Positions 156 and 167 each coordinate AMP. Position 206 (glycine 206) interacts with ATP.

This sequence belongs to the adenylate kinase family. As to quaternary structure, monomer.

The protein localises to the cytoplasm. The enzyme catalyses AMP + ATP = 2 ADP. The protein operates within purine metabolism; AMP biosynthesis via salvage pathway; AMP from ADP: step 1/1. In terms of biological role, catalyzes the reversible transfer of the terminal phosphate group between ATP and AMP. Plays an important role in cellular energy homeostasis and in adenine nucleotide metabolism. The sequence is that of Adenylate kinase from Burkholderia mallei (strain NCTC 10247).